Consider the following 406-residue polypeptide: Arginine deiminase (406 aa).

Cysteine 396 (amidino-cysteine intermediate) is an active-site residue.

This sequence belongs to the arginine deiminase family.

The protein localises to the cytoplasm. It catalyses the reaction L-arginine + H2O = L-citrulline + NH4(+). The protein operates within amino-acid degradation; L-arginine degradation via ADI pathway; carbamoyl phosphate from L-arginine: step 1/2. This is Arginine deiminase from Aliivibrio fischeri (strain MJ11) (Vibrio fischeri).